The sequence spans 92 residues: ATP synthase subunit c (92 aa).

Helical transmembrane passes span 20-40 and 71-91; these read GAGL…GTGL and MAIS…LVFV.

It belongs to the ATPase C chain family. As to quaternary structure, F-type ATPases have 2 components, F(1) - the catalytic core - and F(0) - the membrane proton channel. F(1) has five subunits: alpha(3), beta(3), gamma(1), delta(1), epsilon(1). F(0) has three main subunits: a(1), b(2) and c(10-14). The alpha and beta chains form an alternating ring which encloses part of the gamma chain. F(1) is attached to F(0) by a central stalk formed by the gamma and epsilon chains, while a peripheral stalk is formed by the delta and b chains.

It localises to the cell membrane. Functionally, f(1)F(0) ATP synthase produces ATP from ADP in the presence of a proton or sodium gradient. F-type ATPases consist of two structural domains, F(1) containing the extramembraneous catalytic core and F(0) containing the membrane proton channel, linked together by a central stalk and a peripheral stalk. During catalysis, ATP synthesis in the catalytic domain of F(1) is coupled via a rotary mechanism of the central stalk subunits to proton translocation. In terms of biological role, key component of the F(0) channel; it plays a direct role in translocation across the membrane. A homomeric c-ring of between 10-14 subunits forms the central stalk rotor element with the F(1) delta and epsilon subunits. The chain is ATP synthase subunit c from Mycoplasmopsis pulmonis (strain UAB CTIP) (Mycoplasma pulmonis).